The primary structure comprises 299 residues: Acetylglutamate kinase (299 aa).

Residues 72-73 (GG), R94, and N196 contribute to the substrate site.

The protein belongs to the acetylglutamate kinase family. ArgB subfamily.

It localises to the cytoplasm. The enzyme catalyses N-acetyl-L-glutamate + ATP = N-acetyl-L-glutamyl 5-phosphate + ADP. It functions in the pathway amino-acid biosynthesis; L-arginine biosynthesis; N(2)-acetyl-L-ornithine from L-glutamate: step 2/4. In terms of biological role, catalyzes the ATP-dependent phosphorylation of N-acetyl-L-glutamate. The chain is Acetylglutamate kinase from Burkholderia cenocepacia (strain ATCC BAA-245 / DSM 16553 / LMG 16656 / NCTC 13227 / J2315 / CF5610) (Burkholderia cepacia (strain J2315)).